The following is a 308-amino-acid chain: MQETQRLAVELPGLSLKNPIIAASGTCGYGQEAAKKYNLNHLGSLVLKSTTLYPRQGNPRPRVCETSAGWLNANGLQNVGITAATNEKIPWLRKNYPQLPIIASAAGFSEDEYVKVVSEFANTAGVKAIELNVSCPNVKHGGMAMGTDPEVLQRLVKQVVKAALGIPIYVKLTPNVTNIVPLAQAAEQGGANGLTMINTLTGLSIDLKTRRPALANVTGGLSGPAIKPLALRMIHQVRQVSSLPIIGVGGIESAEDVLEFMMAGANAVQIGAASFHDPLACPKIAADLPIVMDRYGIKKLTDLWEVRF.

Residues serine 24 and 48–49 (KS) each bind FMN. Substrate-binding positions include lysine 48, 72–76 (NANGL), and asparagine 132. Asparagine 132 contributes to the FMN binding site. Cysteine 135 functions as the Nucleophile in the catalytic mechanism. Positions 171 and 197 each coordinate FMN. 198–199 (NT) serves as a coordination point for substrate. FMN contacts are provided by residues glycine 223 and 249–250 (GG).

Belongs to the dihydroorotate dehydrogenase family. Type 1 subfamily. Homodimer. It depends on FMN as a cofactor.

It localises to the cytoplasm. It catalyses the reaction (S)-dihydroorotate + fumarate = orotate + succinate. It participates in pyrimidine metabolism; UMP biosynthesis via de novo pathway. Catalyzes the conversion of dihydroorotate to orotate with fumarate as the electron acceptor. This is Dihydroorotate dehydrogenase A (fumarate) (pyrD) from Limosilactobacillus reuteri (strain DSM 20016) (Lactobacillus reuteri).